A 423-amino-acid chain; its full sequence is Maltooligosaccharide ABC transporter solute-binding lipoprotein (423 aa).

Residues M1–A24 form the signal peptide. C25 carries N-palmitoyl cysteine lipidation. C25 carries S-diacylglycerol cysteine lipidation. Residues Y52, D77, D83, D103–R104, E148, D193, N196, E251–G254, W274, and K307 each bind substrate.

The protein belongs to the bacterial solute-binding protein 1 family.

It localises to the cell membrane. Part of an ABC transporter complex involved in the uptake of maltodextrins. Binds glycogen-derived linear maltooligosaccharides increasing in size from maltotriose to maltooctaose with the highest affinity for maltotriose. Has a very weak affinity for maltose. Has also a very low affinity for maltotetraitol, indicating that the binding is selective for maltooligosaccharides with an intact reducing end. This Streptococcus pneumoniae (strain ATCC BAA-255 / R6) protein is Maltooligosaccharide ABC transporter solute-binding lipoprotein (malX).